The chain runs to 360 residues: Methylthioribose-1-phosphate isomerase (360 aa).

Asp-246 functions as the Proton donor in the catalytic mechanism.

This sequence belongs to the eIF-2B alpha/beta/delta subunits family. MtnA subfamily.

The protein resides in the cytoplasm. It localises to the nucleus. It catalyses the reaction 5-(methylsulfanyl)-alpha-D-ribose 1-phosphate = 5-(methylsulfanyl)-D-ribulose 1-phosphate. Its pathway is amino-acid biosynthesis; L-methionine biosynthesis via salvage pathway; L-methionine from S-methyl-5-thio-alpha-D-ribose 1-phosphate: step 1/6. Functionally, catalyzes the interconversion of methylthioribose-1-phosphate (MTR-1-P) into methylthioribulose-1-phosphate (MTRu-1-P). This chain is Methylthioribose-1-phosphate isomerase, found in Aedes aegypti (Yellowfever mosquito).